Here is a 269-residue protein sequence, read N- to C-terminus: Indole-3-glycerol phosphate synthase (269 aa).

Belongs to the TrpC family.

The catalysed reaction is 1-(2-carboxyphenylamino)-1-deoxy-D-ribulose 5-phosphate + H(+) = (1S,2R)-1-C-(indol-3-yl)glycerol 3-phosphate + CO2 + H2O. The protein operates within amino-acid biosynthesis; L-tryptophan biosynthesis; L-tryptophan from chorismate: step 4/5. The sequence is that of Indole-3-glycerol phosphate synthase from Rhodococcus jostii (strain RHA1).